A 562-amino-acid polypeptide reads, in one-letter code: Arginine--tRNA ligase (562 aa).

The 'HIGH' region signature appears at 129–139; it reads ANPTGPLHVGH.

This sequence belongs to the class-I aminoacyl-tRNA synthetase family. In terms of assembly, monomer.

Its subcellular location is the cytoplasm. It carries out the reaction tRNA(Arg) + L-arginine + ATP = L-arginyl-tRNA(Arg) + AMP + diphosphate. This Xylella fastidiosa (strain M12) protein is Arginine--tRNA ligase.